The following is a 310-amino-acid chain: Aspartate carbamoyltransferase catalytic subunit (310 aa).

2 residues coordinate carbamoyl phosphate: Arg-54 and Thr-55. Residue Lys-84 participates in L-aspartate binding. Residues Arg-105, His-134, and Gln-137 each coordinate carbamoyl phosphate. The L-aspartate site is built by Arg-167 and Arg-229. The carbamoyl phosphate site is built by Leu-267 and Pro-268.

This sequence belongs to the aspartate/ornithine carbamoyltransferase superfamily. ATCase family. As to quaternary structure, heterododecamer (2C3:3R2) of six catalytic PyrB chains organized as two trimers (C3), and six regulatory PyrI chains organized as three dimers (R2).

The enzyme catalyses carbamoyl phosphate + L-aspartate = N-carbamoyl-L-aspartate + phosphate + H(+). It functions in the pathway pyrimidine metabolism; UMP biosynthesis via de novo pathway; (S)-dihydroorotate from bicarbonate: step 2/3. Catalyzes the condensation of carbamoyl phosphate and aspartate to form carbamoyl aspartate and inorganic phosphate, the committed step in the de novo pyrimidine nucleotide biosynthesis pathway. This Enterobacter sp. (strain 638) protein is Aspartate carbamoyltransferase catalytic subunit.